A 532-amino-acid polypeptide reads, in one-letter code: Small ribosomal subunit protein uS2cz (532 aa).

The interval 1-271 is N-terminal extension; that stretch reads METLEKNFKK…SPISSKEKKA (271 aa). 3 TRAM domains span residues 38–97, 127–186, and 197–260; these read ALQA…SILN, DFKV…KPIL, and NQMI…KILK.

It belongs to the universal ribosomal protein uS2 family.

It localises to the plastid. The protein resides in the chloroplast. The sequence is that of Small ribosomal subunit protein uS2cz (rps2-1) from Tetradesmus obliquus (Green alga).